The chain runs to 251 residues: Capsid protein (251 aa).

The Bipartite nuclear localization signal motif lies at 3–20 (KRDAPWRLMAGTSKVSRS). The short motif at 35-49 (KAAAWVNRPMYRKPR) is the Nuclear localization signal element. A zinc finger spans residues 63 to 80 (CEGPCKVQSYEQRHDISH). Positions 96–117 (ITHRVGKRFCVKSVYILGKIWM) match the Nuclear export signal motif. Positions 195–242 (RRFWKVNNHVVYNHQEAGKYENHTENALLLYMACTHASNPVYATLKIR) match the Bipartite nuclear localization signal motif.

The protein belongs to the geminiviridae capsid protein family. As to quaternary structure, homomultimer. Binds to single-stranded and double-stranded viral DNA. Interacts (via nuclear localization signals) with host importin alpha-1a.

It localises to the virion. It is found in the host nucleus. Functionally, encapsidates the viral DNA into characteristic twinned ('geminate') particles. Binds the genomic viral ssDNA and shuttles it into and out of the cell nucleus. The CP of bipartite geminiviruses is not required for cell-to-cell or systemic movement. In Squash leaf curl virus (SLCV), this protein is Capsid protein.